Reading from the N-terminus, the 231-residue chain is MSNREVIIALDFDSLDKTCKFLNLFENQNLFVKIGMELFYQNGLQVLHEIKNRGHKIFLDLKLHDIPNTVYHAVKGLMKFDVDIITVHCAGGLTMLNQAKQAVFDQNKNTKIIGITQLTSTSETEMQTQQKISTSLQDSVLNYAKLAKEANIDGVVSSVWETKKIKEQNGNNFLVINPGIRLEKDDSGDQKRVASPLDAKNQLADFIVVGRPITKDNNPLEKYLEIKRMFV.

Substrate-binding positions include aspartate 11, lysine 33, 60 to 69 (DLKLHDIPNT), threonine 119, arginine 181, glutamine 190, glycine 210, and arginine 211. Residue lysine 62 is the Proton donor of the active site.

It belongs to the OMP decarboxylase family. Type 1 subfamily. In terms of assembly, homodimer.

It catalyses the reaction orotidine 5'-phosphate + H(+) = UMP + CO2. It functions in the pathway pyrimidine metabolism; UMP biosynthesis via de novo pathway; UMP from orotate: step 2/2. In terms of biological role, catalyzes the decarboxylation of orotidine 5'-monophosphate (OMP) to uridine 5'-monophosphate (UMP). This chain is Orotidine 5'-phosphate decarboxylase, found in Malacoplasma penetrans (strain HF-2) (Mycoplasma penetrans).